Here is a 533-residue protein sequence, read N- to C-terminus: Beta-1,2-xylosyltransferase RCN11 (533 aa).

Over 1 to 23 the chain is Cytoplasmic; it reads MMPVRTYHHHHHHNNSNNHRLRR. A helical; Signal-anchor for type II membrane protein transmembrane segment spans residues 24 to 44; the sequence is IIPRVLLAVFAIYAVSFAAYL. Over 45–533 the chain is Lumenal; that stretch reads LRHQSPHPHP…LSNILKGFGC (489 aa). Residues 51 to 78 are disordered; it reads HPHPHPAADPERDAVDAAGGGGGGGAVD. Positions 56-65 are enriched in basic and acidic residues; it reads PAADPERDAV. N-linked (GlcNAc...) asparagine glycosylation is found at N307 and N313.

It belongs to the glycosyltransferase 61 family. In terms of tissue distribution, expressed at the base of the crown roots and in the basal region of the shoot, which contains the shoot and axillary meristems.

The protein resides in the golgi apparatus membrane. Its pathway is glycan metabolism. Its function is as follows. Glycosyltransferase involved in the xylosylation of N-glycans. Possesses beta-1,2-xylosyltransferase activity, transferring xylose from UDP-xylose to the core beta-linked mannose of N-glycans. Beta-1,2-linked xylose residues on N-glycans are critical for seed germination and plant development and growth under conditions of abiotic stress. The sequence is that of Beta-1,2-xylosyltransferase RCN11 from Oryza sativa subsp. japonica (Rice).